The following is a 206-amino-acid chain: Platelet glycoprotein Ib beta chain (206 aa).

The N-terminal stretch at 1 to 25 is a signal peptide; sequence MGSGPRGALSLLLLLLAPPSRPAAG. 2 disulfide bridges follow: Cys26–Cys32 and Cys30–Cys39. An LRRNT domain is found at 27 to 55; sequence PAPCSCAGTLVDCGRRGLTWASLPTAFPV. The Extracellular segment spans residues 27–147; sequence PAPCSCAGTL…RAACAPGPLC (121 aa). Residues 60–83 form an LRR repeat; the sequence is LVLTGNNLTALPPGLLDALPALRT. N-linked (GlcNAc...) asparagine glycosylation occurs at Asn66. Positions 89-143 constitute an LRRCT domain; that stretch reads NPWRCDCRLVPLRAWLAGRPERAPYRDLRCVAPPALRGRLLPYLAEDELRAACAP. 2 disulfide bridges follow: Cys93–Cys118 and Cys95–Cys141. Residues 148–172 form a helical membrane-spanning segment; the sequence is WGALAAQLALLGLGLLHALLLVLLL. The Cytoplasmic segment spans residues 173–206; the sequence is CRLRRLRARARARAAARLSLTDPLVAERAGTDES. Phosphoserine; by PKA is present on Ser191. A Phosphothreonine modification is found at Thr193.

As to quaternary structure, two GP-Ib beta are disulfide-linked to one GP-Ib alpha. GP-IX is complexed with the GP-Ib heterodimer via a non covalent linkage. Interacts with TRAF4. As to expression, expressed in heart and brain.

It localises to the membrane. Functionally, gp-Ib, a surface membrane protein of platelets, participates in the formation of platelet plugs by binding to von Willebrand factor, which is already bound to the subendothelium. The sequence is that of Platelet glycoprotein Ib beta chain (GP1BB) from Homo sapiens (Human).